The primary structure comprises 150 residues: Large ribosomal subunit protein bL9 (150 aa).

Belongs to the bacterial ribosomal protein bL9 family.

In terms of biological role, binds to the 23S rRNA. In Yersinia pseudotuberculosis serotype I (strain IP32953), this protein is Large ribosomal subunit protein bL9.